A 249-amino-acid polypeptide reads, in one-letter code: Ribosomal RNA small subunit methyltransferase G (249 aa).

S-adenosyl-L-methionine is bound by residues Gly-88, Phe-93, 111-113 (DAT), 139-140 (AE), and Arg-158.

Belongs to the methyltransferase superfamily. RNA methyltransferase RsmG family.

It localises to the cytoplasm. Functionally, specifically methylates the N7 position of a guanine in 16S rRNA. The polypeptide is Ribosomal RNA small subunit methyltransferase G (Thermus thermophilus (strain ATCC BAA-163 / DSM 7039 / HB27)).